A 192-amino-acid chain; its full sequence is MITISDAAQAHFVTLLADQPEGTHIRVFVISPGTATAECGVSYCPPDAVEADDMEFEFNGFNAMVDEKSAPFLEEASIDFVTDQLGSQLTLKAPNAKMRKVASDAPLSERIDYVIQSEINPQLASHGGNIMLVEVTEEGTAILQFGGGCNGCSMVDVTLKDGIETQLLEKFPGELTGVKDVTEHQHGDHSYQ.

Residues Cys-149 and Cys-152 each contribute to the [4Fe-4S] cluster site.

The protein belongs to the NfuA family. In terms of assembly, homodimer. It depends on [4Fe-4S] cluster as a cofactor.

Involved in iron-sulfur cluster biogenesis. Binds a 4Fe-4S cluster, can transfer this cluster to apoproteins, and thereby intervenes in the maturation of Fe/S proteins. Could also act as a scaffold/chaperone for damaged Fe/S proteins. This chain is Fe/S biogenesis protein NfuA, found in Shewanella sediminis (strain HAW-EB3).